The sequence spans 207 residues: Large ribosomal subunit protein uL4 (207 aa).

Residues 49–75 (HAVKNRSAVSGGGRKPWKQKGTGRARA) are disordered.

Belongs to the universal ribosomal protein uL4 family. Part of the 50S ribosomal subunit.

Functionally, one of the primary rRNA binding proteins, this protein initially binds near the 5'-end of the 23S rRNA. It is important during the early stages of 50S assembly. It makes multiple contacts with different domains of the 23S rRNA in the assembled 50S subunit and ribosome. In terms of biological role, forms part of the polypeptide exit tunnel. The polypeptide is Large ribosomal subunit protein uL4 (Leuconostoc mesenteroides subsp. mesenteroides (strain ATCC 8293 / DSM 20343 / BCRC 11652 / CCM 1803 / JCM 6124 / NCDO 523 / NBRC 100496 / NCIMB 8023 / NCTC 12954 / NRRL B-1118 / 37Y)).